A 315-amino-acid polypeptide reads, in one-letter code: Probable cell division protein WhiA (315 aa).

The segment at residues Ser277–Gln311 is a DNA-binding region (H-T-H motif).

It belongs to the WhiA family.

Functionally, involved in cell division and chromosome segregation. This chain is Probable cell division protein WhiA, found in Lacticaseibacillus casei (strain BL23) (Lactobacillus casei).